Here is a 2155-residue protein sequence, read N- to C-terminus: MQPHRVFIFGDQTGGFATGLQQLLLDKTNPSLVYFVDHANLALRQELSRLPSTDREALPLIGSVQDILTLHKKGERNVVIDSILSTVYHLACFIYKYGNAGCAYPNGQDIHVTGMCVGSLAAAAVSCSRSIGDVIVAGIVAIRAALRVGLRAHQAALLISNRAAPHTHWSYAVSTESLRLDLIKDALEEFAQDMDTSPLSHPYISAIGLDSVTVSGPPSQLQQFWRENTTFHKPIPIPIWAPYHGPHIFGDSDVETIIESLHPIPKLSQQAPIISSGSGVMASQTLADLIRAALRDILLHRLDLPALVGHIKDIVRSSPNQDFSMTPIATNAATGLVAATAKAAGNKGSVDNEIMDAAALAGSASRATSAKTHDSKIAIIGMSGRFPEAADLDSFWSLLEQGVDAYRPVPPDRFDAHAHHDETGRRKNTSKVLGGCWINQPGLFDPKFFSISPKEAEQSDPAQRLALQTAYEALEMAGVVPDRTQSTQRDRVGVFYGMVSDDWREINSGQNIDTYFIPGGIRAFTPGRINYHFKFSGPSITVDTACSSSLAAIHVACNSLWRGDCDTAVAGGVNVLTNPDIFAGLDRGHFLSTTGNCKTFDDDADGYCRADGVGTVILKRLEDAVMDKDPILAILNSAYTNHSAEAVSITRPHAGAQELIFSKLLRETGIHPHDVSYIEMHGTGTQAGDATEMSSVLRTFAPDTRRLSSQTLHLGSAKSNVGHGEAASGVTSLIKVLLMMKHNTIPPHCGIKGRINHRFPTDLRERNVFIASQPVAWNKPHTGSGKRRVFINNFSAAGGNSALLLEDAPAGENPETKDPRSTHVVAVSAKSSTSLANNLKRLRDFVQDNIHDLDSLSKLSYTTTARRIHYPFRTAVTASSRDQLLQGIESVLLRDEMPKPCKSQKNIGFVFSGQGAQYAGMGRHLFQNNHTFRTQILACNQICLSQGFPSILEIFKQDVDMNSLEPLLVQLATTCLQMSLVSFWKSLGVTPDFCIGHSLGEYAALQAAGVLSVSDTIYLTGIRARMLQEKCSAGSHAMLAVRAPLARVNALLDPAIHEVTCLNGPQDVVIGGRVADVEALEKELAKQDIKAVKVSVPFAFHSTQVEPILGEFCDAARGVPFQTQTIPVVSTLLGEVVQPEAAGVFGPGYLKRHCREPVNFAAAVQAARDANVIHAGTVFVEIGPHPVCLALLKSNMGPDAVTLASLHRKDDGWKVLADTLAALYQSGLKINWDEVHRDFASCQEVLPLPSYSWDNKNYWIQYVHNWTLTKGDEPAAMAETTALQAQDGLTSSVQRIIRQTDGPGSLVTIVVQSDFGSARLADVAQGHKVNGEMLCTSSLYAEIGMTLGRHLLEKYRPDLDGYSTEIKDMSVDKPLILKDENKQTLFRAEVVHDKTTHTATMSIYSVDSAGNKTVDHARCLLRFADPTSWLDEWERTYYLIDRSVRWLEERAEQGTDSLLSKGIVYKLFSSLVDYSPSFKGLQEVILNSGDREAAAKVRLQAEKGDFDCNPMWIDSFGQLTGFLMNGHDFTGKDEVFINHGWRSMRCAKPFRKDAVYRTYIRMQHVEKTKYRGDLYIIEDGVIVAVFGGMTFLGMSRSLLNKVLPPRRGAEAINTPHPVAAAQQGMAASAKDTERRPLDIPTRAQRQPSSPQTGTMGRILAILSKEVGLSMETLTDDLVFTDYGVDSLLSLTITGRIREELGLDMDSSIFTHYSTLGELKAFLGADQPDDAVACESSIGQHTPQTSDKGSGTLASQKTDGDTGPDTTLNRVCAIIAEEVGISVQELSSSQDFQELGIDSLSSLTILSRVREELQLDLESDFFDTHPSFYALQKALCGSEASNGAPEANETTPSSDRLESDLRSITWQSGQNIVASPPHATSILVSGSPSTARMILVLFPDGSGSAASYGALAPKIRRDIAVYALNCPWRTNGEEILRLGVTLDQMVAKHLVEVGRILDSHQRGRPGSSNASVGLALGGWSAGGILALEAVRQLREAGVAVQKMVLLDAPNPIGLQNPPPRMFHFLDELGILGAGKGKAPAWVLRHFDAMVTLLKSYRPRRLGAEDAPKCLIVYAKDGICKDPNGPRMDTKPDDAREMLWLLYNRVDFSAEGWKTLVGPQNLAVGVVEDVNHFSMMNPGPKMVEMGNLIGDFLLGPS.

The tract at residues 7–244 (FIFGDQTGGF…IPIPIWAPYH (238 aa)) is N-terminal acylcarrier protein transacylase domain (SAT). Residues 374–807 (DSKIAIIGMS…GGNSALLLED (434 aa)) form the Ketosynthase family 3 (KS3) domain. Active-site for beta-ketoacyl synthase activity residues include Cys-546, His-681, and His-723. A malonyl-CoA:ACP transacylase (MAT) domain region spans residues 908–1213 (GFVFSGQGAQ…ASLHRKDDGW (306 aa)). The active-site For acyl/malonyl transferase activity is Ser-998. Residues 1290–1605 (TSSVQRIIRQ…RSLLNKVLPP (316 aa)) are product template (PT) domain. The segment at 1294–1428 (QRIIRQTDGP…CLLRFADPTS (135 aa)) is N-terminal hotdog fold. The region spanning 1294–1600 (QRIIRQTDGP…FLGMSRSLLN (307 aa)) is the PKS/mFAS DH domain. His-1327 acts as the Proton acceptor; for dehydratase activity in catalysis. The segment at 1455-1600 (TDSLLSKGIV…FLGMSRSLLN (146 aa)) is C-terminal hotdog fold. The active-site Proton donor; for dehydratase activity is the Asp-1514. Positions 1626–1654 (AASAKDTERRPLDIPTRAQRQPSSPQTGT) are disordered. Positions 1643 to 1654 (AQRQPSSPQTGT) are enriched in polar residues. The region spanning 1649 to 1726 (SPQTGTMGRI…ELKAFLGADQ (78 aa)) is the Carrier 1 domain. The residue at position 1686 (Ser-1686) is an O-(pantetheine 4'-phosphoryl)serine. Residues 1735 to 1765 (SSIGQHTPQTSDKGSGTLASQKTDGDTGPDT) are disordered. A compositionally biased stretch (polar residues) spans 1736–1756 (SIGQHTPQTSDKGSGTLASQK). The Carrier 2 domain occupies 1764 to 1838 (DTTLNRVCAI…ALQKALCGSE (75 aa)). Residue Ser-1798 is modified to O-(pantetheine 4'-phosphoryl)serine. The tract at residues 1873–2149 (ASPPHATSIL…MVEMGNLIGD (277 aa)) is thioesterase (TE) domain. Ser-1979 functions as the For thioesterase activity in the catalytic mechanism.

Polyketide synthase; part of the Pks2 gene cluster that mediates the formation of infectious structures (appressoria), enabling these fungi to kill insects faster. The product of the Pks2 gene cluster is different from the one of Pks1 and has still not been identified. This chain is Polyketide synthase 2, found in Metarhizium anisopliae (strain ARSEF 549).